The sequence spans 264 residues: H-2 class II histocompatibility antigen, E-B beta chain (264 aa).

The N-terminal stretch at 1–26 (MVWLPRVPCVAAVILLLTVLSPPMAL) is a signal peptide. Residues 27–121 (VRDSRPWFLE…ISDKFLVRRR (95 aa)) are beta-1. Residues 27 to 225 (VRDSRPWFLE…KAQSTSAQNK (199 aa)) are Extracellular-facing. 2 cysteine pairs are disulfide-bonded: Cys-38–Cys-106 and Cys-144–Cys-200. Asn-46 carries N-linked (GlcNAc...) asparagine glycosylation. The tract at residues 122 to 225 (VEPTVTVYPT…KAQSTSAQNK (104 aa)) is beta-2. One can recognise an Ig-like C1-type domain in the interval 124-214 (PTVTVYPTKT…PSLTDPVTVE (91 aa)). The helical transmembrane segment at 226 to 246 (MLSGVGGFVLGLLFLGAGLFI) threads the bilayer. Residues 247-264 (YFRNQKGQSGLQPTGLLS) lie on the Cytoplasmic side of the membrane.

Belongs to the MHC class II family. Ubiquitinated in immature dendritic cells leading to down-regulation of MHC class II.

The protein resides in the membrane. This is H-2 class II histocompatibility antigen, E-B beta chain (H2-Eb1) from Mus musculus (Mouse).